The primary structure comprises 352 residues: Protein RecA (352 aa).

Gly67–Thr74 contributes to the ATP binding site.

The protein belongs to the RecA family.

The protein localises to the cytoplasm. Can catalyze the hydrolysis of ATP in the presence of single-stranded DNA, the ATP-dependent uptake of single-stranded DNA by duplex DNA, and the ATP-dependent hybridization of homologous single-stranded DNAs. It interacts with LexA causing its activation and leading to its autocatalytic cleavage. This Chlamydia trachomatis serovar A (strain ATCC VR-571B / DSM 19440 / HAR-13) protein is Protein RecA.